Consider the following 408-residue polypeptide: Argininosuccinate synthase (408 aa).

ATP-binding positions include 10–18 (AYSGGLDTS) and alanine 37. L-citrulline contacts are provided by tyrosine 90 and serine 95. Glycine 120 is a binding site for ATP. L-aspartate contacts are provided by threonine 122, asparagine 126, and aspartate 127. An L-citrulline-binding site is contributed by asparagine 126. Arginine 130, serine 181, serine 190, glutamate 266, and tyrosine 278 together coordinate L-citrulline.

The protein belongs to the argininosuccinate synthase family. Type 1 subfamily. In terms of assembly, homotetramer.

It localises to the cytoplasm. It catalyses the reaction L-citrulline + L-aspartate + ATP = 2-(N(omega)-L-arginino)succinate + AMP + diphosphate + H(+). It functions in the pathway amino-acid biosynthesis; L-arginine biosynthesis; L-arginine from L-ornithine and carbamoyl phosphate: step 2/3. The chain is Argininosuccinate synthase from Chromobacterium violaceum (strain ATCC 12472 / DSM 30191 / JCM 1249 / CCUG 213 / NBRC 12614 / NCIMB 9131 / NCTC 9757 / MK).